The primary structure comprises 377 residues: Nitric oxide reductase FlRd-NAD(+) reductase (377 aa).

This sequence belongs to the FAD-dependent oxidoreductase family. It depends on FAD as a cofactor.

Its subcellular location is the cytoplasm. It carries out the reaction 2 reduced [nitric oxide reductase rubredoxin domain] + NAD(+) + H(+) = 2 oxidized [nitric oxide reductase rubredoxin domain] + NADH. Its pathway is nitrogen metabolism; nitric oxide reduction. One of at least two accessory proteins for anaerobic nitric oxide (NO) reductase. Reduces the rubredoxin moiety of NO reductase. The polypeptide is Nitric oxide reductase FlRd-NAD(+) reductase (Escherichia coli O81 (strain ED1a)).